Reading from the N-terminus, the 38-residue chain is Photosystem I reaction center subunit IX (38 aa).

A helical membrane pass occupies residues 4–24 (FLTAAPVVAAIWFTATAGILI).

The protein belongs to the PsaJ family.

It is found in the cellular thylakoid membrane. Its function is as follows. May help in the organization of the PsaE and PsaF subunits. This is Photosystem I reaction center subunit IX from Synechococcus sp. (strain CC9605).